Reading from the N-terminus, the 152-residue chain is Protein-export protein SecB (152 aa).

Belongs to the SecB family. Homotetramer, a dimer of dimers. One homotetramer interacts with 1 SecA dimer.

The protein localises to the cytoplasm. In terms of biological role, one of the proteins required for the normal export of preproteins out of the cell cytoplasm. It is a molecular chaperone that binds to a subset of precursor proteins, maintaining them in a translocation-competent state. It also specifically binds to its receptor SecA. The protein is Protein-export protein SecB of Rickettsia bellii (strain RML369-C).